Consider the following 367-residue polypeptide: Cystinosin (367 aa).

A signal peptide spans 1-22 (MRRNWLLILTLFLLMFIEKYES). Residues 23–125 (TVSLTAPPTV…LVIHSRIVSI (103 aa)) are Lumenal-facing. 6 N-linked (GlcNAc...) asparagine glycosylation sites follow: Asn-36, Asn-51, Asn-66, Asn-84, Asn-104, and Asn-107. Positions 123–189 (VSIINQVIGW…LLWVPYIQEE (67 aa)) constitute a PQ-loop 1 domain. A helical transmembrane segment spans residues 126 to 150 (INQVIGWIYFMAWSVSFYPQVIQNW). Residues 151-159 (RRKSVIGLS) are Cytoplasmic-facing. Residues 160–179 (FDFLALNLTGFVAYSVFNIG) traverse the membrane as a helical segment. An L-cystine-binding site is contributed by Asn-166. Over 180–202 (LLWVPYIQEEFLLKYPNGVNPVD) the chain is Lumenal. The helical transmembrane segment at 203–225 (SNDAFFSLHAVALTLIVILQCCL) threads the bilayer. Asp-205 lines the H(+) pocket. Topologically, residues 226–234 (YERGNQRVS) are cytoplasmic. A helical membrane pass occupies residues 235-257 (WPSIGFLVLAWLFVLVTMIVAAV). Topologically, residues 258-263 (GITTWL) are lumenal. In terms of domain architecture, PQ-loop 2 spans 263-328 (LQFLFCFSYI…QSYNNDQWTL (66 aa)). A helical transmembrane segment spans residues 264-289 (QFLFCFSYIKLIITLIKYFPQAYMNF). Residues Lys-273, Lys-280, and Tyr-281 each contribute to the L-cystine site. At 290–298 (YYKSTKGWS) the chain is on the cytoplasmic side. Residues 299–308 (IGGVLLDFTG) form a helical membrane-spanning segment. Asp-305 serves as a coordination point for L-cystine. Asp-305 lines the H(+) pocket. Residues 309 to 331 (GSFSLLQMFLQSYNNDQWTLIFG) are Lumenal-facing. Residues 332–354 (DPTKFGLGVFTIFFDVVFFIQHF) traverse the membrane as a helical segment. Asp-346 is a binding site for H(+). Over 355-367 (YLYRKKPGYDQLN) the chain is Cytoplasmic. A Lysosomal targeting motif motif is present at residues 362-366 (GYDQL).

It belongs to the cystinosin family. Interacts with components of the V-ATPase complex. Interacts with components of the Ragulator complex. Interacts with RRAGA/RagA and RRAGC/RagC. Interacts with AP-3 complex subunit mu (AP3M1 or AP3M2).

The protein localises to the lysosome membrane. It is found in the melanosome membrane. It carries out the reaction L-cystine(out) + H(+)(out) = L-cystine(in) + H(+)(in). Switches between a lumen- and a cytosol-open conformation: pH induces conformational changes and shifts the equilibrium to facilitate the transition between the lumen- and cytosol-open conformation, thereby promoting cystine transport. Protonation of specific aspartate residues (Asp-205, Asp-305 and Asp-346) favors the cytosol-open conformation. Functionally, cystine/H(+) symporter that mediates export of cystine, the oxidized dimer of cysteine, from lysosomes. Plays an important role in melanin synthesis by catalyzing cystine export from melanosomes, possibly by inhibiting pheomelanin synthesis. In addition to cystine export, also acts as a positive regulator of mTORC1 signaling in kidney proximal tubular cells, via interactions with components of the v-ATPase and Ragulator complexes. Also involved in small GTPase-regulated vesicle trafficking and lysosomal localization of LAMP2A, independently of cystine transporter activity. The polypeptide is Cystinosin (Mus musculus (Mouse)).